We begin with the raw amino-acid sequence, 443 residues long: Dynein regulatory complex protein 9 (443 aa).

2 disordered regions span residues 1–40 and 415–443; these read MEED…LPKE and GFKM…GKKK. The region spanning 393–422 is the IQ domain; that stretch reads ELKSVIKLQAWWRGTMIRREIGGFKMPKDK. Positions 415-430 are enriched in basic and acidic residues; it reads GFKMPKDKVDSKDSKG. Residues 431–443 are compositionally biased toward basic residues; it reads KGKGKDKRRGKKK.

Belongs to the DRC9 family. In terms of assembly, component of the nexin-dynein regulatory complex (N-DRC). Interacts (via IQ domain) with CALM when calcium levels are low. Does not interact with CALM in the presence of Ca(2+). Interacts with the HSP70 proteins HSPA1L and HSPA8. May form a complex with CAMK4 and HSP70.

Its subcellular location is the cytoplasm. The protein resides in the cell projection. It is found in the cilium. It localises to the flagellum. The protein localises to the cytoskeleton. Its subcellular location is the flagellum axoneme. Its function is as follows. Component of the nexin-dynein regulatory complex (N-DRC), a key regulator of ciliary/flagellar motility which maintains the alignment and integrity of the distal axoneme and regulates microtubule sliding in motile axonemes. Binds calmodulin when cellular Ca(2+) levels are low and thereby contributes to the regulation of calcium and calmodulin-dependent protein kinase IV (CAMK4) activity; contributes to the regulation of CAMK4 signaling cascades. Required for normal axoneme assembly in sperm flagella, normal sperm tail formation and for male fertility. This is Dynein regulatory complex protein 9 (IQCG) from Macaca fascicularis (Crab-eating macaque).